Here is a 169-residue protein sequence, read N- to C-terminus: MNKPICSTGLRWLWLAVVVVILDISSKQWVMAHFALYESVPLIPFFNLTYAQNFGAAFSFLADKSGWQRWFFAGIAIGISVVLMVMMYRSTAKQRLINCAYALIIGGALGNLYDRLVHGAVNDFLDFYINNWHFPTFNLADVAISIGAVLVIFEGFLSPAEKNAVNKNE.

Helical transmembrane passes span 4 to 24 (PICS…ILDI), 29 to 49 (WVMA…FNLT), 70 to 90 (WFFA…MYRS), and 101 to 121 (YALI…HGAV). Active-site residues include Asp123 and Asp141. Residues 137 to 157 (FNLADVAISIGAVLVIFEGFL) traverse the membrane as a helical segment.

The protein belongs to the peptidase A8 family.

It localises to the cell inner membrane. It catalyses the reaction Release of signal peptides from bacterial membrane prolipoproteins. Hydrolyzes -Xaa-Yaa-Zaa-|-(S,diacylglyceryl)Cys-, in which Xaa is hydrophobic (preferably Leu), and Yaa (Ala or Ser) and Zaa (Gly or Ala) have small, neutral side chains.. Its pathway is protein modification; lipoprotein biosynthesis (signal peptide cleavage). This protein specifically catalyzes the removal of signal peptides from prolipoproteins. This chain is Lipoprotein signal peptidase, found in Yersinia pseudotuberculosis serotype O:1b (strain IP 31758).